Reading from the N-terminus, the 349-residue chain is Putative F-box/kelch-repeat protein At4g02310 (349 aa).

The F-box domain maps to serine 11–leucine 58. The Kelch repeat unit spans residues lysine 154–proline 204.

This Arabidopsis thaliana (Mouse-ear cress) protein is Putative F-box/kelch-repeat protein At4g02310.